The primary structure comprises 1217 residues: Valine--tRNA ligase (1217 aa).

The GST C-terminal domain maps to Asn-27–Val-155. The 'HIGH' region signature appears at Pro-293–His-303. Positions Lys-809–Ser-813 match the 'KMSKS' region motif. Lys-812 lines the ATP pocket.

This sequence belongs to the class-I aminoacyl-tRNA synthetase family.

The catalysed reaction is tRNA(Val) + L-valine + ATP = L-valyl-tRNA(Val) + AMP + diphosphate. The polypeptide is Valine--tRNA ligase (vars1) (Takifugu rubripes (Japanese pufferfish)).